Consider the following 473-residue polypeptide: Glycine--tRNA ligase (473 aa).

Arg-101 and Glu-172 together coordinate substrate. Residues 204 to 206 (RNE), 214 to 219 (FRTREF), 289 to 290 (EL), and 333 to 336 (GVER) each bind ATP. 219–223 (FEQME) provides a ligand contact to substrate. 329-333 (EPSVG) serves as a coordination point for substrate.

Belongs to the class-II aminoacyl-tRNA synthetase family. As to quaternary structure, homodimer.

It is found in the cytoplasm. It catalyses the reaction tRNA(Gly) + glycine + ATP = glycyl-tRNA(Gly) + AMP + diphosphate. Catalyzes the attachment of glycine to tRNA(Gly). This chain is Glycine--tRNA ligase, found in Ureaplasma urealyticum serovar 10 (strain ATCC 33699 / Western).